The sequence spans 185 residues: MAYIYGDTMKIDTTGASEATAKQDKLTIKGVEAPKKLAEHDLARGEKYKNMITKVGKAKKMDPAVIAAMISRESRAGAVLKNGWEPAGNGFGLMQVDKRSHTPVGAWDSEQHVTQATEILIGFIKEIKVNFPKWTQEQCFKGGIAAYNKGVSRVTSYENIDVKTTGLDYSSDVVARAQWFRSKGY.

Glu73 is an active-site residue.

It belongs to the glycosyl hydrolase 23 family.

The catalysed reaction is Hydrolysis of (1-&gt;4)-beta-linkages between N-acetylmuramic acid and N-acetyl-D-glucosamine residues in a peptidoglycan and between N-acetyl-D-glucosamine residues in chitodextrins.. The protein is Lysozyme g of Cyprinus carpio (Common carp).